Consider the following 54-residue polypeptide: ATP synthase F(0) complex subunit 8 (54 aa).

Residues 4–24 (LNPGPWFAILVFSWLIFLTII) traverse the membrane as a helical segment. The segment at 35 to 54 (NEPTPVSAEKHKTESWDWPW) is disordered. The span at 42-54 (AEKHKTESWDWPW) shows a compositional bias: basic and acidic residues.

Belongs to the ATPase protein 8 family. In terms of assembly, component of the ATP synthase complex composed at least of ATP5F1A/subunit alpha, ATP5F1B/subunit beta, ATP5MC1/subunit c (homooctomer), MT-ATP6/subunit a, MT-ATP8/subunit 8, ATP5ME/subunit e, ATP5MF/subunit f, ATP5MG/subunit g, ATP5MK/subunit k, ATP5MJ/subunit j, ATP5F1C/subunit gamma, ATP5F1D/subunit delta, ATP5F1E/subunit epsilon, ATP5PF/subunit F6, ATP5PB/subunit b, ATP5PD/subunit d, ATP5PO/subunit OSCP. ATP synthase complex consists of a soluble F(1) head domain (subunits alpha(3) and beta(3)) - the catalytic core - and a membrane F(0) domain - the membrane proton channel (subunits c, a, 8, e, f, g, k and j). These two domains are linked by a central stalk (subunits gamma, delta, and epsilon) rotating inside the F1 region and a stationary peripheral stalk (subunits F6, b, d, and OSCP).

Its subcellular location is the mitochondrion membrane. Subunit 8, of the mitochondrial membrane ATP synthase complex (F(1)F(0) ATP synthase or Complex V) that produces ATP from ADP in the presence of a proton gradient across the membrane which is generated by electron transport complexes of the respiratory chain. ATP synthase complex consist of a soluble F(1) head domain - the catalytic core - and a membrane F(1) domain - the membrane proton channel. These two domains are linked by a central stalk rotating inside the F(1) region and a stationary peripheral stalk. During catalysis, ATP synthesis in the catalytic domain of F(1) is coupled via a rotary mechanism of the central stalk subunits to proton translocation. In vivo, can only synthesize ATP although its ATP hydrolase activity can be activated artificially in vitro. Part of the complex F(0) domain. The chain is ATP synthase F(0) complex subunit 8 from Cyprinus carpio (Common carp).